Here is a 186-residue protein sequence, read N- to C-terminus: Akirin-1A (186 aa).

A disordered region spans residues 14-65; that stretch reads EALMSPQSPKRRRCAPLPGSPATPSPQRCAIRPEMQQGQQQPLSQLGGDRRL. Residues 49–60 are compositionally biased toward low complexity; the sequence is QQGQQQPLSQLG. The short motif at 183–186 is the SYVS motif element; the sequence is SYVS.

Belongs to the akirin family.

It is found in the nucleus. Its function is as follows. Molecular adapter that acts as a bridge between proteins, and which is involved skeletal muscle development. Functions as a signal transducer for MSTN during skeletal muscle regeneration and myogenesis. The sequence is that of Akirin-1A (akirin1-a) from Xenopus laevis (African clawed frog).